The sequence spans 200 residues: Potassium-transporting ATPase KdpC subunit (200 aa).

The helical transmembrane segment at 7–27 (PALVMIVLFTILTGLIYPLAM) threads the bilayer.

It belongs to the KdpC family. In terms of assembly, the system is composed of three essential subunits: KdpA, KdpB and KdpC.

The protein resides in the cell inner membrane. Functionally, part of the high-affinity ATP-driven potassium transport (or Kdp) system, which catalyzes the hydrolysis of ATP coupled with the electrogenic transport of potassium into the cytoplasm. This subunit acts as a catalytic chaperone that increases the ATP-binding affinity of the ATP-hydrolyzing subunit KdpB by the formation of a transient KdpB/KdpC/ATP ternary complex. The polypeptide is Potassium-transporting ATPase KdpC subunit (Methylocella silvestris (strain DSM 15510 / CIP 108128 / LMG 27833 / NCIMB 13906 / BL2)).